The chain runs to 424 residues: Steryl acetyl hydrolase 1 (424 aa).

Alanine 2 is modified (N-acetylalanine). The Cytoplasmic portion of the chain corresponds to 2–45 (AANSGLDSKVEYYRLQENEIISAVSSEDADQNDAGFRLSTIHLH). The chain crosses the membrane as a helical; Signal-anchor for type II membrane protein span at residues 46–66 (LFHGLKFAALLFTVVPVFIIL). At 67 to 424 (DSMKIIFQRK…IARILEFMQS (358 aa)) the chain is on the lumenal side. Residue asparagine 85 is glycosylated (N-linked (GlcNAc...) asparagine). Positions 176 to 178 (HGG) match the Involved in the stabilization of the negatively charged intermediate by the formation of the oxyanion hole motif. Serine 250 is a catalytic residue. An N-linked (GlcNAc...) asparagine glycan is attached at asparagine 283. Histidine 395 is a catalytic residue. Asparagine 401 is a glycosylation site (N-linked (GlcNAc...) asparagine).

Belongs to the 'GDXG' lipolytic enzyme family.

The protein resides in the endoplasmic reticulum membrane. Functionally, required for the deacetylation of acetylated sterols. Involved in the resistance to eugenol and pregnenolone toxicity. The sequence is that of Steryl acetyl hydrolase 1 (SAY1) from Saccharomyces cerevisiae (strain ATCC 204508 / S288c) (Baker's yeast).